The sequence spans 306 residues: D-alanine--D-alanine ligase (306 aa).

The 200-residue stretch at 104 to 303 folds into the ATP-grasp domain; sequence KMLWKAFGLP…FEQLVVKILE (200 aa). 134-189 contributes to the ATP binding site; it reads VAKLGLPLMVKPSLEGSSVGLTKVKAVEELKSAVEYALKFDNTILIEEWLAGDELT. Positions 257, 270, and 272 each coordinate Mg(2+).

Belongs to the D-alanine--D-alanine ligase family. Mg(2+) serves as cofactor. The cofactor is Mn(2+).

The protein localises to the cytoplasm. It catalyses the reaction 2 D-alanine + ATP = D-alanyl-D-alanine + ADP + phosphate + H(+). The protein operates within cell wall biogenesis; peptidoglycan biosynthesis. In terms of biological role, cell wall formation. This Haemophilus influenzae (strain 86-028NP) protein is D-alanine--D-alanine ligase.